The following is a 268-amino-acid chain: MVSLTTCCLKNIVNQHAHVENTVLLYHLGLRWNCKTLYQCTQCNGINYTNSHSDQCKNKDLFLMKVIVKKNLAVARTLLSWGASPEYARLFCRNTEEEQALNVQHVADMSSSKILERLTMSYKENDEQLLITFYLLNLSTNFSTNLREQVRFNIVSYIICDLAIHQTFKTFYAKNYSLSTLYCIFLAIYYKLYTALRKMVKIYPGLKPFVYLTGFIFDDETVMETYNSTDDEISECKNRIIAIKGCYGNFHCRSDIDHMYAFSQNDYW.

Residues 1–175 (MVSLTTCCLK…QTFKTFYAKN (175 aa)) lie on the Cytoplasmic side of the membrane. Residues 176–193 (YSLSTLYCIFLAIYYKLY) traverse the membrane as a helical segment. Residues 194–268 (TALRKMVKIY…MYAFSQNDYW (75 aa)) lie on the Extracellular side of the membrane.

This sequence belongs to the asfivirus MGF 300 family.

It is found in the host membrane. In terms of biological role, plays a role in virus cell tropism, and may be required for efficient virus replication in macrophages. This chain is Protein MGF 300-1L, found in Ornithodoros (relapsing fever ticks).